A 67-amino-acid chain; its full sequence is MAVTGQVKWFNNEKGFGFIEVPGENDVFVHFSAIETDGFKSLEEGQKVSFEIEEGNRGPQAKNVIKL.

A CSD domain is found at 5–64 (GQVKWFNNEKGFGFIEVPGENDVFVHFSAIETDGFKSLEEGQKVSFEIEEGNRGPQAKNV).

As to quaternary structure, homodimer.

It is found in the cytoplasm. Its function is as follows. Can bind to ATTGG and CCAAT motifs (Y-box motifs) of single-stranded oligonucleotides. This chain is Major cold shock protein CspA (cspA), found in Bacillus anthracis.